Reading from the N-terminus, the 203-residue chain is Transmembrane emp24 domain-containing protein (203 aa).

The signal sequence occupies residues 1–22; that stretch reads MASIRLLPSCIVLMFLARSSLC. Topologically, residues 23-170 are lumenal; sequence YFITIDAHGE…RSINDNTNSR (148 aa). Positions 32–114 constitute a GOLD domain; that stretch reads EECFHDKVTS…PKVLKFSMDI (83 aa). The helical transmembrane segment at 171–191 threads the bilayer; that stretch reads VVWWSFFESLVLVAMTLGQVY. Residues 192-203 lie on the Cytoplasmic side of the membrane; sequence YLKRFFEVRRVV.

Belongs to the EMP24/GP25L family.

The protein localises to the cytoplasmic vesicle membrane. In terms of biological role, could have a role in the budding of coatomer-coated and other species of coated vesicles. The sequence is that of Transmembrane emp24 domain-containing protein from Nematostella vectensis (Starlet sea anemone).